The primary structure comprises 177 residues: Alkyl hydroperoxide reductase AhpD (177 aa).

Cysteine 131 acts as the Proton donor in catalysis. Residues cysteine 131 and cysteine 134 are joined by a disulfide bond. The active-site Cysteine sulfenic acid (-SOH) intermediate is cysteine 134.

The protein belongs to the AhpD family. As to quaternary structure, homotrimer.

It carries out the reaction N(6)-[(R)-dihydrolipoyl]-L-lysyl-[lipoyl-carrier protein] + a hydroperoxide = N(6)-[(R)-lipoyl]-L-lysyl-[lipoyl-carrier protein] + an alcohol + H2O. Functionally, antioxidant protein with alkyl hydroperoxidase activity. Required for the reduction of the AhpC active site cysteine residues and for the regeneration of the AhpC enzyme activity. The polypeptide is Alkyl hydroperoxide reductase AhpD (Streptomyces avermitilis (strain ATCC 31267 / DSM 46492 / JCM 5070 / NBRC 14893 / NCIMB 12804 / NRRL 8165 / MA-4680)).